Here is a 332-residue protein sequence, read N- to C-terminus: Fructose-1,6-bisphosphatase class 1 (332 aa).

4 residues coordinate Mg(2+): glutamate 89, aspartate 110, leucine 112, and aspartate 113. Residues aspartate 113–serine 116, asparagine 206, tyrosine 239, tyrosine 257–tyrosine 259, and lysine 269 contribute to the substrate site. Glutamate 275 serves as a coordination point for Mg(2+).

This sequence belongs to the FBPase class 1 family. Homotetramer. Mg(2+) is required as a cofactor.

Its subcellular location is the cytoplasm. The catalysed reaction is beta-D-fructose 1,6-bisphosphate + H2O = beta-D-fructose 6-phosphate + phosphate. It functions in the pathway carbohydrate biosynthesis; gluconeogenesis. The protein is Fructose-1,6-bisphosphatase class 1 of Citrobacter koseri (strain ATCC BAA-895 / CDC 4225-83 / SGSC4696).